We begin with the raw amino-acid sequence, 123 residues long: Large ribosomal subunit protein uL14 (123 aa).

The protein belongs to the universal ribosomal protein uL14 family. As to quaternary structure, part of the 50S ribosomal subunit. Forms a cluster with proteins L3 and L19. In the 70S ribosome, L14 and L19 interact and together make contacts with the 16S rRNA in bridges B5 and B8.

In terms of biological role, binds to 23S rRNA. Forms part of two intersubunit bridges in the 70S ribosome. The sequence is that of Large ribosomal subunit protein uL14 from Actinobacillus succinogenes (strain ATCC 55618 / DSM 22257 / CCUG 43843 / 130Z).